Reading from the N-terminus, the 486-residue chain is Cardiolipin synthase A (486 aa).

2 helical membrane passes run 3 to 23 (TFYTVISWLLVFSYWLLIAGV) and 38 to 58 (MAWLLVIYILPLVGIVAYLSF). PLD phosphodiesterase domains are found at residues 219-246 (MDLRQHRKIILIDSRIAYTGSMNMVDPR) and 399-426 (KDGLLHTKSVLVDGQLSLVGTVNLDMRS). Catalysis depends on residues His-224, Lys-226, Asp-231, His-404, Lys-406, and Asp-411.

This sequence belongs to the phospholipase D family. Cardiolipin synthase subfamily. ClsA sub-subfamily.

Its subcellular location is the cell inner membrane. The catalysed reaction is 2 a 1,2-diacyl-sn-glycero-3-phospho-(1'-sn-glycerol) = a cardiolipin + glycerol. Its function is as follows. Catalyzes the reversible phosphatidyl group transfer from one phosphatidylglycerol molecule to another to form cardiolipin (CL) (diphosphatidylglycerol) and glycerol. The chain is Cardiolipin synthase A from Pectobacterium atrosepticum (strain SCRI 1043 / ATCC BAA-672) (Erwinia carotovora subsp. atroseptica).